The following is a 217-amino-acid chain: Heart- and neural crest derivatives-expressed protein 2 (217 aa).

A disordered region spans residues 76–116 (DHSHYGGVPPGAGPPGLGGPRPVKRRGTANRKERRRTQSIN). A compositionally biased stretch (gly residues) spans 83-94 (VPPGAGPPGLGG). A compositionally biased stretch (basic residues) spans 97-112 (PVKRRGTANRKERRRT). Residues 99–151 (KRRGTANRKERRRTQSINSAFAELRECIPNVPADTKLSKIKTLRLATSYIAYL) enclose the bHLH domain.

In terms of assembly, efficient DNA binding requires dimerization with another bHLH protein. Forms homodimers and heterodimers with TCF3 gene products E12 and E47, HAND1 and HEY1, HEY2 and HEYL (hairy-related transcription factors).

The protein localises to the nucleus. In terms of biological role, essential for cardiac morphogenesis, particularly for the formation of the right ventricle and of the aortic arch arteries. Required for vascular development and regulation of angiogenesis, possibly through a VEGF signaling pathway. Also plays an important role in limb development, particularly in the establishment of anterior-posterior polarization, acting as an upstream regulator of sonic hedgehog (SHH) induction in the limb bud. Is involved in the development of branchial arches, which give rise to unique structures in the head and neck. Binds DNA on E-box consensus sequence 5'-CANNTG-3'. The chain is Heart- and neural crest derivatives-expressed protein 2 (Hand2) from Rattus norvegicus (Rat).